We begin with the raw amino-acid sequence, 198 residues long: NAD(P)H dehydrogenase (quinone) (198 aa).

A Flavodoxin-like domain is found at 4–189 (VLVLYYSMYG…SIARYQGEYV (186 aa)). FMN is bound by residues 10–15 (SMYGHI) and 78–80 (TRF). Tyr12 serves as a coordination point for NAD(+). Position 98 (Trp98) interacts with substrate. FMN-binding positions include 113–118 (STGTGG) and His133.

It belongs to the WrbA family. FMN is required as a cofactor.

It carries out the reaction a quinone + NADH + H(+) = a quinol + NAD(+). The enzyme catalyses a quinone + NADPH + H(+) = a quinol + NADP(+). The chain is NAD(P)H dehydrogenase (quinone) from Shigella dysenteriae serotype 1 (strain Sd197).